We begin with the raw amino-acid sequence, 468 residues long: Lysosomal dipeptide transporter MFSD1 (468 aa).

Positions methionine 1–alanine 25 are disordered. The Dileucine internalization motif signature appears at leucine 11 to leucine 12. The next 12 membrane-spanning stretches (helical) occupy residues leucine 42–cysteine 62, leucine 86–isoleucine 106, threonine 116–phenylalanine 136, alanine 138–valine 158, leucine 173–leucine 194, leucine 218–leucine 238, tryptophan 270–valine 290, alanine 307–valine 327, isoleucine 334–threonine 354, leucine 364–valine 384, phenylalanine 395–leucine 415, and leucine 421–leucine 441.

This sequence belongs to the major facilitator superfamily. In terms of assembly, homodimer. Interacts with lysosomal protein GLMP (via lumenal domain); the interaction starts while both proteins are still in the endoplasmic reticulum and is required for stabilization of MFSD1 in lysosomes but has no direct effect on its targeting to lysosomes or transporter activity.

The protein localises to the lysosome membrane. The catalysed reaction is L-alpha-aminoacyl-L-arginine(out) = L-alpha-aminoacyl-L-arginine(in). The enzyme catalyses L-arginyl-L-alpha-amino acid(out) = L-arginyl-L-alpha-amino acid(in). It catalyses the reaction L-arginyl-glycine(out) = L-arginyl-glycine(in). It carries out the reaction L-alpha-aminoacyl-L-lysine(out) = L-alpha-aminoacyl-L-lysine(in). The catalysed reaction is L-aspartyl-L-lysine(out) = L-aspartyl-L-lysine(in). The enzyme catalyses L-alanyl-L-lysine(out) = L-alanyl-L-lysine(in). It catalyses the reaction L-lysyl-L-alpha-amino acid(out) = L-lysyl-L-alpha-amino acid(in). It carries out the reaction L-lysyl-L-alanine(out) = L-lysyl-L-alanine(in). The catalysed reaction is L-lysyl-L-lysine(out) = L-lysyl-L-lysine(in). The enzyme catalyses L-lysyl-glycine(out) = L-lysyl-glycine(in). It catalyses the reaction L-alpha-aminoacyl-L-histidine(out) = L-alpha-aminoacyl-L-histidine(in). It carries out the reaction L-histidyl-L-alpha-amino acid(out) = L-histidyl-L-alpha-amino acid(in). The catalysed reaction is L-histidyl-glycine(out) = L-histidyl-glycine(in). In terms of biological role, lysosomal dipeptide uniporter that selectively exports lysine, arginine or histidine-containing dipeptides with a net positive charge from the lysosome lumen into the cytosol. Could play a role in a specific type of protein O-glycosylation indirectly regulating macrophages migration and tissue invasion. Also essential for liver homeostasis. This chain is Lysosomal dipeptide transporter MFSD1, found in Bos taurus (Bovine).